The following is a 361-amino-acid chain: Peptide chain release factor 1 (361 aa).

Residue Gln237 is modified to N5-methylglutamine. The interval 286 to 306 is disordered; the sequence is AKQDQEQAAKRKSLVGSGDRS.

This sequence belongs to the prokaryotic/mitochondrial release factor family. Post-translationally, methylated by PrmC. Methylation increases the termination efficiency of RF1.

The protein resides in the cytoplasm. Peptide chain release factor 1 directs the termination of translation in response to the peptide chain termination codons UAG and UAA. The polypeptide is Peptide chain release factor 1 (Coxiella burnetii (strain CbuG_Q212) (Coxiella burnetii (strain Q212))).